A 596-amino-acid polypeptide reads, in one-letter code: MAQAWAFLLPVLVLGSYVTSLFLPTYITGPLCGGDGGGRSLFLCAQAPKDQDPSPASTMYKTAFHFQPAKNWMNDPSGPMYFNGIYHEFYQYNLNGPIFGDIVWGHSVSTDLANWIGLEPALVRDTPSDIDGCWTGSVTILPGGKPIIIYTGGDIDQNQAQNIAFPKNRSDPYLREWIKADNNPVLRPDEPGMNSIEFRDPTTGWIGPDGLWRMAVGGELNGYSAALLYKSEDFLNWTKVDHPLYSHNGSNMWECPDFFAVLPGNNAGLDLSAAIPQGAKHALKMSVDSVDKYMIGVYDLHRDAFVPDNVVDDRRLWLRIDYGTFYASKSFFDPNKNRRIIWGWSRETDSPSDDLAKGWAGLHTIPRTIWLAGDGKQLLQWPVEEIESLRTNEINHQGLELNKGDLFEIKEVDAFQADVEIGFELASIDDADPFDPSWLLDPEKHCGEAGASVPGGIGPFGLVILASDNMDEHTEVYFRVYKSQEKYMVLMCSDLRRSSLRPDLEKPAYGGFFEFDLEKERKISLRTLIDRSAVESFGGGGRVCITSRVYPAVLADVGSAHIYAFNNGGATVRVPQLSAWTMRKAQVNVEKGWSAI.

The N-terminal stretch at 1-20 is a signal peptide; it reads MAQAWAFLLPVLVLGSYVTS. Residue aspartate 75 is part of the active site. N-linked (GlcNAc...) asparagine glycosylation is found at asparagine 168, asparagine 236, and asparagine 248. Cysteine 446 and cysteine 492 are oxidised to a cystine.

It belongs to the glycosyl hydrolase 32 family. In terms of tissue distribution, expressed in the stem, particularly the penultimate internode. Little expression is detected in roots and in the peduncle part of the stem.

The catalysed reaction is Hydrolysis of terminal, non-reducing (2-&gt;1)-linked beta-D-fructofuranose residues in fructans.. Inhibited by sucrose. In terms of biological role, hydrolyzes inulin-type beta-(2,1)-fructans and beta-(2,1)-linkages in branched fructans. Has low activity against beta-(2,6)-linked fructans. May play a role as a beta-(2,1)-trimmer during graminan biosynthesis. This chain is Fructan 1-exohydrolase w3, found in Triticum aestivum (Wheat).